Here is a 159-residue protein sequence, read N- to C-terminus: Phosphopantetheine adenylyltransferase (159 aa).

Residue Ser9 coordinates substrate. Residues 9-10 (SF) and His17 each bind ATP. Substrate is bound by residues Lys41, Leu73, and Lys87. ATP contacts are provided by residues 88–90 (GLR), Glu98, and 122–128 (YSFLSSS).

This sequence belongs to the bacterial CoaD family. Homohexamer. The cofactor is Mg(2+).

It localises to the cytoplasm. The enzyme catalyses (R)-4'-phosphopantetheine + ATP + H(+) = 3'-dephospho-CoA + diphosphate. Its pathway is cofactor biosynthesis; coenzyme A biosynthesis; CoA from (R)-pantothenate: step 4/5. Functionally, reversibly transfers an adenylyl group from ATP to 4'-phosphopantetheine, yielding dephospho-CoA (dPCoA) and pyrophosphate. The sequence is that of Phosphopantetheine adenylyltransferase from Streptomyces avermitilis (strain ATCC 31267 / DSM 46492 / JCM 5070 / NBRC 14893 / NCIMB 12804 / NRRL 8165 / MA-4680).